A 292-amino-acid chain; its full sequence is Probable serine/threonine-protein kinase FPV226 (292 aa).

The region spanning Trp14–Leu292 is the Protein kinase domain. ATP is bound by residues Ile20–Val28 and Lys43. Asp147 functions as the Proton acceptor in the catalytic mechanism.

The protein belongs to the protein kinase superfamily. Ser/Thr protein kinase family. Poxviruses subfamily.

The enzyme catalyses L-seryl-[protein] + ATP = O-phospho-L-seryl-[protein] + ADP + H(+). The catalysed reaction is L-threonyl-[protein] + ATP = O-phospho-L-threonyl-[protein] + ADP + H(+). The polypeptide is Probable serine/threonine-protein kinase FPV226 (Vertebrata (FPV)).